We begin with the raw amino-acid sequence, 591 residues long: Lipoprotein LpqB (591 aa).

An N-terminal signal peptide occupies residues 1–20 (MTLRPSRRAVLSAAAVLLTG). C21 carries N-palmitoyl cysteine lipidation. C21 carries the S-diacylglycerol cysteine lipid modification.

It belongs to the LpqB lipoprotein family.

The protein localises to the cell membrane. The protein is Lipoprotein LpqB of Cutibacterium acnes (strain DSM 16379 / KPA171202) (Propionibacterium acnes).